The sequence spans 210 residues: Thymidylate kinase (210 aa).

Residue 10–17 (GIDGCGKT) coordinates ATP.

It belongs to the thymidylate kinase family.

The enzyme catalyses dTMP + ATP = dTDP + ADP. In terms of biological role, phosphorylation of dTMP to form dTDP in both de novo and salvage pathways of dTTP synthesis. The sequence is that of Thymidylate kinase from Prochlorococcus marinus (strain MIT 9515).